The sequence spans 235 residues: Fibrillarin-like rRNA/tRNA 2'-O-methyltransferase (235 aa).

Residues 91–92, 110–111, 137–138, and 157–160 each bind S-adenosyl-L-methionine; these read TT, EF, DA, and DVAQ.

The protein belongs to the methyltransferase superfamily. Fibrillarin family. As to quaternary structure, interacts with nop5. Component of box C/D small ribonucleoprotein (sRNP) particles that contain rpl7ae, FlpA and nop5, plus a guide RNA.

Its function is as follows. Involved in pre-rRNA and tRNA processing. Utilizes the methyl donor S-adenosyl-L-methionine to catalyze the site-specific 2'-hydroxyl methylation of ribose moieties in rRNA and tRNA. Site specificity is provided by a guide RNA that base pairs with the substrate. Methylation occurs at a characteristic distance from the sequence involved in base pairing with the guide RNA. In Pyrobaculum islandicum (strain DSM 4184 / JCM 9189 / GEO3), this protein is Fibrillarin-like rRNA/tRNA 2'-O-methyltransferase.